A 462-amino-acid polypeptide reads, in one-letter code: Calcitonin gene-related peptide type 1 receptor (462 aa).

An N-terminal signal peptide occupies residues 1 to 22 (MEKKYILYFLFLLPFFMILVIA). Over 23–140 (ETEEENPDDL…NTHEKVQTAL (118 aa)) the chain is Extracellular. Cystine bridges form between cysteine 49/cysteine 75, cysteine 66/cysteine 106, and cysteine 89/cysteine 128. N-linked (GlcNAc...) asparagine glycosylation is found at asparagine 67, asparagine 119, and asparagine 124. A helical transmembrane segment spans residues 141-165 (NLFYLTIIGHGLSIASLLISLGIFF). Over 166–176 (YFKSLSCQRIT) the chain is Cytoplasmic. A helical membrane pass occupies residues 177–199 (LHKNLFFSFVCNSIVTIIHLTAV). Residues 200 to 210 (ANNQALVATNP) are Extracellular-facing. The helical transmembrane segment at 211 to 239 (VSCKVFQFIHLYLMGCNYFWMLCEGIYLH) threads the bilayer. The Cytoplasmic portion of the chain corresponds to 240–253 (TLIVVAVFAEKQHL). A helical membrane pass occupies residues 254–274 (MWYYFLGWGFPLIPACIHAVA). At 275–290 (RRLYYNDNCWISSDTH) the chain is on the extracellular side. Positions 289-290 (TH) are required for RAMP3 interaction. Residues 291–315 (LLYIIHGPICAALLVNLFFLLNIVR) traverse the membrane as a helical segment. Residues 316 to 330 (VLITKLKVTHQAESN) lie on the Cytoplasmic side of the membrane. A helical transmembrane segment spans residues 331 to 352 (LYMKAVRATLILVPLLGIEFVL). The Extracellular portion of the chain corresponds to 353–367 (IPWRPEGKIAEEVYD). The helical transmembrane segment at 368–388 (YIMHILVHYQGLLVSTIYCFF) threads the bilayer. Residues 389-462 (NGEVQAILRR…IVIKPEKLYD (74 aa)) lie on the Cytoplasmic side of the membrane. Phosphoserine is present on residues serine 421 and serine 446.

Belongs to the G-protein coupled receptor 2 family. Heterodimer of CALCRL and RAMP1; the receptor complex functions as CGRP receptor. Heterodimer of CALCRL and RAMP2 or CALCRL and RAMP3; the complexes function as adrenomedullin receptor. In terms of tissue distribution, detected in lung and coronary artery.

The protein localises to the cell membrane. In terms of biological role, g protein-coupled receptor which specificity is determined by its interaction with receptor-activity-modifying proteins (RAMPs). Together with RAMP1, form the receptor complex for calcitonin-gene-related peptides CALCA/CGRP1 and CALCB/CGRP2. Together with RAMP2 or RAMP3, function as receptor complexes for adrenomedullin (ADM and ADM2). Ligand binding causes a conformation change that triggers signaling via guanine nucleotide-binding proteins (G proteins) and modulates the activity of downstream effectors. Activates cAMP-dependent pathway. The chain is Calcitonin gene-related peptide type 1 receptor (CALCRL) from Sus scrofa (Pig).